A 438-amino-acid polypeptide reads, in one-letter code: Coenzyme A disulfide reductase (438 aa).

An FAD-binding site is contributed by 8-33 (GAVAGGATCASQIRRLDKESDIIIFE). Residues threonine 15, glutamine 19, arginine 22, serine 39, and asparagine 42 each contribute to the substrate site. The active-site Nucleophile is the cysteine 43. Cysteine 43 serves as the catalytic Redox-active. Substrate is bound at residue lysine 71. 151–166 (VLVIGAGYVSLEVLEN) contributes to the NADP(+) binding site. 267–277 (TNVPNIYAIGD) contacts FAD. Residue histidine 299 participates in substrate binding. Position 419 (tyrosine 419) interacts with FAD. Lysine 427 provides a ligand contact to substrate.

Belongs to the class-III pyridine nucleotide-disulfide oxidoreductase family. As to quaternary structure, homodimer. FAD serves as cofactor.

The catalysed reaction is NADP(+) + 2 CoA = CoA-disulfide + NADPH + H(+). Catalyzes specifically the NADPH-dependent reduction of coenzyme A disulfide. The chain is Coenzyme A disulfide reductase from Staphylococcus aureus (strain Mu3 / ATCC 700698).